A 414-amino-acid polypeptide reads, in one-letter code: Serine hydroxymethyltransferase (414 aa).

(6S)-5,6,7,8-tetrahydrofolate-binding positions include Leu-121 and 125 to 127; that span reads GHL. Position 229 is an N6-(pyridoxal phosphate)lysine (Lys-229).

This sequence belongs to the SHMT family. Homodimer. Pyridoxal 5'-phosphate serves as cofactor.

Its subcellular location is the cytoplasm. It carries out the reaction (6R)-5,10-methylene-5,6,7,8-tetrahydrofolate + glycine + H2O = (6S)-5,6,7,8-tetrahydrofolate + L-serine. It functions in the pathway one-carbon metabolism; tetrahydrofolate interconversion. Its pathway is amino-acid biosynthesis; glycine biosynthesis; glycine from L-serine: step 1/1. Its function is as follows. Catalyzes the reversible interconversion of serine and glycine with tetrahydrofolate (THF) serving as the one-carbon carrier. This reaction serves as the major source of one-carbon groups required for the biosynthesis of purines, thymidylate, methionine, and other important biomolecules. Also exhibits THF-independent aldolase activity toward beta-hydroxyamino acids, producing glycine and aldehydes, via a retro-aldol mechanism. The chain is Serine hydroxymethyltransferase from Herminiimonas arsenicoxydans.